Here is a 198-residue protein sequence, read N- to C-terminus: uncharacterized protein (198 aa).

The C4-type zinc-finger motif lies at 9 to 43 (CPVCGGKGTFVITSHQIDIPYFGPVLETTMICEKC).

The protein belongs to the ZPR1 family.

This is an uncharacterized protein from Methanocaldococcus jannaschii (strain ATCC 43067 / DSM 2661 / JAL-1 / JCM 10045 / NBRC 100440) (Methanococcus jannaschii).